Reading from the N-terminus, the 93-residue chain is MGRSLKKGPFADASLLKKVEAQADSDKKTVIKTWSRRSTIFPSFIGYTFAVYDGRKHVPVYVQEDMVGHKLGEFVPTRTFRGHAADDKKTGRK.

The protein belongs to the universal ribosomal protein uS19 family.

Functionally, protein S19 forms a complex with S13 that binds strongly to the 16S ribosomal RNA. The chain is Small ribosomal subunit protein uS19 from Limosilactobacillus fermentum (strain NBRC 3956 / LMG 18251) (Lactobacillus fermentum).